The primary structure comprises 1391 residues: MAKSYTGRKRVRKSFGRIPTVAPMPNLIEVQKSSYDHFLQMDTAPEQRGNVGLQEVFKSVFPIKDFSERGTLEFVRYELEQPKYDVEECQQRGMTFAAPLKVTLRLVVWDIDEDTGSRSIRDIKEQDVYMGDMPLMTSNGTFVINGTERVIVSQMHRSPGVFFDHDKGKTHSSGKYLFAARVIPYRGSWLDFEFDAKDLVYVRIDRRRKLPVTTLLYALDGMNTAALRAQRAAEGRGLEQSEIKGMTSEEILSYFYGKVVYTRGPKGWKTPFDAERLKGVKLVSDLIDAKSGEKVADAGSKMTPRLGKKLREAGLTDIVVFPEDMIGQYVAEDIINEQTGEIFTEAGDELTANLVAELEKAGISELPVLAIDHINVGPYMRNTLAIDKNSSREEALIDIYRVMRPGEPPTLETAEALFTGLFFDSERYDLSAVGRVKMNSRLNTPEVADTVRVLRKEDILGVIKVLVELKDGKGEIDDIDHLGNRRVRSVGELMENQYRVGLLRMERAIRERMSSVDIDSVMPHDLINAKPAAAAVREFFGSSQLSQFMDQTNPLSEITHKRRLSALGPGGLTRERAGFEVRDVHPTHYGRICPIETPEGPNIGLINSLATYARVNQYGFIEAPYRKVFDGRVTSDVVYLSAMEEGRYTVAQANSILDADGRFTEDLVSCRRAGDFVMVPPNEINMIDVSPKQLVSVAAALIPFLENDDANRALMGSNMQRQAVPLIRAEAPLVGTGMEQAVARDSGAAITAKRTGVVDQVDATRVVIRATEETQASASGVDIYNLLKFQRSNQNTCITQRPLVKVGDLIQKGDIIADGPSTQLGELALGRNVLVAFMPWNGYNFEDSILISERIVRDDVFTSIHIEEFEVMARDTKLGQEEITRDIPNVGEEALKNLDEAGIVYIGAEVKPGDILVGKVTPKGESPMTPEEKLLRAIFGEKASDVRDTSLRLPPGVSGTIVEVRVFSRRGVEKDERALAIERAEIERLAKDRDDERHILERSFFARLKALIIGKKVVSGPKGIKAGTVLADANMDELHPSTWRNIAIDDDAVMADAEALKRAFDQQVDKLQERFENKVEKLQRGDELPPGVMKMVKVFVAVKRKLQPGDKMAGRHGNKGVISRIVPLEDMPYLEDGQQVDIVLNPLGVPSRMNVGQILETHLGWACAGLGQQIGGMLDKYKRNAATIIDLKSKLKDVYGDAIYEDEIAGLADNEITELAHNLTPGVPIATPVFDGARESDIVAMLTKAGRSSSGQVTLVDGRTGEPFDRKVTVGYIYMLKLHHLVDDKIHARSIGPYSLVTQQPLGGKAQFGGQRFGEMEVWALEAYGAAYTLQEMLTVKSDDVSGRTKVYEAIVRGDDTFEAGIPESFNVLVKELRSLGLNVELTQRNY.

This sequence belongs to the RNA polymerase beta chain family. In terms of assembly, the RNAP catalytic core consists of 2 alpha, 1 beta, 1 beta' and 1 omega subunit. When a sigma factor is associated with the core the holoenzyme is formed, which can initiate transcription.

It carries out the reaction RNA(n) + a ribonucleoside 5'-triphosphate = RNA(n+1) + diphosphate. Functionally, DNA-dependent RNA polymerase catalyzes the transcription of DNA into RNA using the four ribonucleoside triphosphates as substrates. The protein is DNA-directed RNA polymerase subunit beta of Paramagnetospirillum magneticum (strain ATCC 700264 / AMB-1) (Magnetospirillum magneticum).